We begin with the raw amino-acid sequence, 252 residues long: Petrobactin import ATP-binding protein YclP (252 aa).

Positions 2 to 236 constitute an ABC transporter domain; that stretch reads VEVRNVSKQY…SVLEEIYDMT (235 aa). An ATP-binding site is contributed by 34–41; it reads GPNGAGKS.

Belongs to the ABC transporter superfamily. As to quaternary structure, the complex is composed of two ATP-binding proteins (YclP), two transmembrane proteins (YclN and YclO) and a solute-binding protein (YclQ).

It is found in the cell membrane. The catalysed reaction is a Fe(III)-siderophore(out) + ATP + H2O = a Fe(III)-siderophore(in) + ADP + phosphate + H(+). Its function is as follows. Part of the ABC transporter complex YclNOPQ involved in uptake of ferric-petrobactin. Petrobactin is a photoreactive 3,4-catecholate siderophore produced by many members of the B.cereus group, including B.anthracis. Probably responsible for energy coupling to the transport system. The polypeptide is Petrobactin import ATP-binding protein YclP (yclP) (Bacillus subtilis (strain 168)).